A 1828-amino-acid polypeptide reads, in one-letter code: Separin (1828 aa).

Residues 1647–1741 (KEAGSYILNP…SGALYECGSF (95 aa)) enclose the Peptidase C50 domain. Cys1730 is a catalytic residue.

In terms of assembly, interacts with cut2. Interacts with rad21.

The protein localises to the cytoplasm. The protein resides in the nucleus. The enzyme catalyses All bonds known to be hydrolyzed by this endopeptidase have arginine in P1 and an acidic residue in P4. P6 is often occupied by an acidic residue or by a hydroxy-amino-acid residue, the phosphorylation of which enhances cleavage.. Its activity is regulated as follows. It is inactivated via its interaction with cut2, which probably covers its active site. Cut2 degradation at anaphase, liberates it and triggers rad21 cleavage. In terms of biological role, caspase-like protease, which plays a central role in the chromosome segregation by cleaving the rad21 subunit of the cohesin complex at the onset of anaphase. During most of the cell cycle, it is inactivated by securin/cut2 protein. It is also required for pointed nuclear formation. This is Separin (cut1) from Schizosaccharomyces pombe (strain 972 / ATCC 24843) (Fission yeast).